The sequence spans 183 residues: Dual-action ribosomal maturation protein DarP (183 aa).

The protein belongs to the DarP family.

It localises to the cytoplasm. In terms of biological role, member of a network of 50S ribosomal subunit biogenesis factors which assembles along the 30S-50S interface, preventing incorrect 23S rRNA structures from forming. Promotes peptidyl transferase center (PTC) maturation. This Klebsiella pneumoniae (strain 342) protein is Dual-action ribosomal maturation protein DarP.